The primary structure comprises 328 residues: Arabinose 5-phosphate isomerase KdsD (328 aa).

Residues 42-184 (CEKMFWCKGK…AVALLKARGF (143 aa)) enclose the SIS domain. Substrate contacts are provided by residues 75–76 (GT), H82, H88, 114–123 (ALIPVLKRLH), 148–150 (KVA), T222, and D275. H82 is a binding site for Zn(2+). Residues 210-268 (MHTGDEIPHVKKTASLRDALLEVTRKNLGMTVICDDNMMIEGIFTDGDLRRVFDMGVDV) form the CBS 1 domain. One can recognise a CBS 2 domain in the interval 277 to 328 (MTPGGIRVRPGILAVEALNLMQSRHITSVMVADGDHLLGVLHMHDLLRAGVV).

It belongs to the SIS family. GutQ/KpsF subfamily. As to quaternary structure, homotetramer.

It carries out the reaction D-arabinose 5-phosphate = D-ribulose 5-phosphate. It functions in the pathway carbohydrate biosynthesis; 3-deoxy-D-manno-octulosonate biosynthesis; 3-deoxy-D-manno-octulosonate from D-ribulose 5-phosphate: step 1/3. Its pathway is bacterial outer membrane biogenesis; lipopolysaccharide biosynthesis. In terms of biological role, involved in the biosynthesis of 3-deoxy-D-manno-octulosonate (KDO), a unique 8-carbon sugar component of lipopolysaccharides (LPSs). Catalyzes the reversible aldol-ketol isomerization between D-ribulose 5-phosphate (Ru5P) and D-arabinose 5-phosphate (A5P). This Escherichia coli O157:H7 protein is Arabinose 5-phosphate isomerase KdsD (kdsD).